The following is a 2303-amino-acid chain: MACKHGYPDVCPICTAVDATPGFEYLLMADGEWYPTDLLCVDLDDDVFWPSDTSNQSQTMDWTDVPLIRDIVMEPQGNSSSSDKSNSQSSGNEGVIINNFYSNQYQNSIDLSASGGNAGDAPQTNGQLSNILGGAANAFATMAPLLLDQNTEEMENLSDRVASDKAGNSATNTQSTVGRLCGYGKSHHGEHPASCADTATDKVLAAERYYTIDLASWTTSQEAFSHIRIPLPHVLAGEDGGVFGATLRRHYLCKTGWRVQVQCNASQFHAGSLLVFMAPEFYTGKGTKTGTMEPSDPFTMDTEWRSPQGAPTGYRYDSRTGFFATNHQNQWQWTVYPHQILNLRTNTTVDLEVPYVNVAPSSSWTQHANWTLVVAVLSPLQYATGSSPDVQITASLQPVNPVFNGLRHETVIAQSPIPVTVREHKGCFYSTNPDTTVPIYGKTISTPSDYMCGEFSDLLELCKLPTFLGNPNTNNKRYPYFSATNSVPATSMVDYQVALSCSCMANSMLAAVARNFNQYRGSLNFLFVFTGAAMVKGKFLIAYTPPGAGKPTTRDQAMQSTYAIWDLGLNSSFNFTAPFISPTHYRQTSYTSPTITSVDGWVTVWKLTPLTYPSGTPTNSDILTLVSAGDDFTLRMPISPTKWVPQGVDNAEKGKVSNDDASVDFVAEPVKLPENQTRVAFFYDRAVPIGMLRPGQNMETTFNYQENDYRLNCLLLTPLPSFCPDSSSGPQKTKAPVQWRWVRSGGVNGANFPLMTKQDYAFLCFSPFTFYKCDLEVTVSALGMTRVASVLRWAPTGAPADVTDQLIGYTPSLGETRNPHMWLVGAGNSQVSFVVPYNSPLSVLPAAWFNGWSDFGNTKDFGVAPNADFGRLWIQGNTSASVRIRYKKMKVFCPRPTLFFPWPTPTTTKINADNPVPILELENPAALYRIDLFITFTDEFITFDYKVHGRPVLTFRIPGFGLTPAGRMLVCMGEQPAHGPFTSSRSLYHVIFTATCSSFSFSIYKGRYRSWKKPIHDELVDRGYTTFGEFFKAVRGYHADYYRQRLIHDVETNPGPVQSVFQPQGAVLTKSLAPQAGIQNLLLRLLGIDGDCSEVSKAITVVTDLVAAWEKAKTTLVSPEFWSKLILKTTKFIAASVLYLHNPDFTTTVCLSLMTGVDLLTNDSVFDWLKQKLSSFFRTPPPACPNVMQPQGPLREANEGFTFAKNIEWAMKTIQSVVNWLTSWFKQEEDHPQSKLDKLLMEFPDHCRNIMDMRNGRKAYCECTASFKYFDELYNLAVTCKRIPLASLCEKFKNRHDHSVTRPEPVVVVLRGAAGQGKSVTSQIIAQSVSKMAFGRQSVYSMPPDSEYFDGYENQFSVIMDDLGQNPDGEDFTVFCQMVSSTNFLPNMAHLERKGTPFTSSFIVATTNLPKFRPVTVAHYPAVDRRITFDFTVTAGPHCKTPAGMLDVEKAFDEIPGSKPQLACFSADCPLLHKRGVMFTCNRTQTVYNLQQVVKMVNDTITRKTENVKKMNSLVAQSPPDWEHFENILTCLRQNNAALQDQLDELQEAFAQARERSDFLSDWLKVSAIIFAGIASLSAVIKLASKFKESIWPTPVRVELSEGEQAAYAGRARAQKQALQVLDIQGGGKVLAQAGNPVMDFELFCAKNIVAPITFYYPDKAEVTQSCLLLRAHLFVVNRHVAETDWTAFKLKDVRHERHTVALRSVNRSGAKTDLTFIKVTKGPLFKDNVNKFCSNKDDFPARNDTVTGIMNTGLAFVYSGNFLIGNQPVNTTTGACFNHCLHYRAQTRRGWCGSAIICNVNGKKAVYGMHSAGGGGLAAATIITKELIEAAEKSMLALEPQGAIVDIATGSVVHVPRKTKLRRTVAHDVFQPKFEPAVLSRYDPRTDKDVDVVAFSKHTTNMESLPPIFDVVCGEYANRVFTILGKENGLLTVEQAVLGLPGMDPMEKDTSPGLPYTQQGLRRTDLLNFITAKMTPQLDYAHSKLVIGVYDDVVYQSFLKDEIRPIEKIHEAKTRIVDVPPFAHCIWGRQLLGRFASKFQTKPGLELGSAIGTDPDVDWTRYAVELSGFNYVYDVDYSNFDASHSTAMFECLINNFFTEQNGFDRRIAEYLRSLAVSRHAYEDRRVLIRGGLPSGCAATSMLNTIMNNVIIRAALYLTYSNFDFDDIKVLSYGDDLLIGTNYQIDFNLVKERLAPFGYKITPANKTTTFPLTSHLQDVTFLKRRFVRFNSYLFRPQMDAVNLKAMVSYCKPGTLKEKLMSIALLAVHSGPDIYDEIFLPFRNVGIVVPTYSSMLYRWLSLFR.

A zinc finger lies at 3 to 14; that stretch reads CKHGYPDVCPIC. Residues 30–46 form an acidic region; it reads DGEWYPTDLLCVDLDDD. Positions 60–73 are theilo; the sequence is MDWTDVPLIRDIVM. Positions 74 to 93 are disordered; that stretch reads EPQGNSSSSDKSNSQSSGNE. The N-myristoyl glycine; by host moiety is linked to residue Gly-77. Positions 78 to 92 are enriched in low complexity; it reads NSSSSDKSNSQSSGN. Cys-501 and Cys-503 are oxidised to a cystine. Positions 1041-1047 are host EIF4E binding; that stretch reads YYRQRLI. Positions 1283 to 1448 constitute an SF3 helicase domain; it reads IPLASLCEKF…CKTPAGMLDV (166 aa). 1312 to 1319 contacts ATP; the sequence is GAAGQGKS. Tyr-1608 carries the post-translational modification O-(5'-phospho-RNA)-tyrosine. The Peptidase C3 domain maps to 1636–1829; the sequence is NPVMDFELFC…AATIITKELI (194 aa). Residues His-1680, Asp-1714, and Cys-1793 each act as for protease 3C activity in the active site. A RdRp catalytic domain is found at 2071 to 2189; it reads NYVYDVDYSN…GTNYQIDFNL (119 aa). Catalysis depends on for RdRp activity residues Asp-2077 and Asp-2175.

Belongs to the picornaviruses polyprotein family. As to quaternary structure, interacts with host EIF4E. Interacts with the leader protein. Interacts with host RAN; the complex L-RAN recruits cellular kinases responsible for the L-induced nucleocytoplasmic trafficking inhibition. The complex L-RAN can further bind to the host exportins XPO1/CRM1 and CSE1L/CAS. Interacts with the protein 2A. Interacts with host RNASEL; this interaction prevents RNASEL activation by its substrate 2'-5' oligoadenylates. In terms of processing, phosphorylated. Post-translationally, specific enzymatic cleavages by the viral protease in vivo yield a variety of precursors and mature proteins. The polyprotein seems to be cotranslationally cleaved at the 2A/2B junction by a ribosomal skip from one codon to the next without formation of a peptide bond. This process would release the P1-2A peptide from the translational complex. During virion maturation, immature virions are rendered infectious following cleavage of VP0 into VP4 and VP2. This maturation seems to be an autocatalytic event triggered by the presence of RNA in the capsid and is followed by a conformational change of the particle. In terms of processing, uridylylated by the polymerase and is covalently linked to the 5'-end of genomic RNA. This uridylylated form acts as a nucleotide-peptide primer for the polymerase. Post-translationally, myristoylation is required during RNA encapsidation and formation of the mature virus particle.

It is found in the virion. Its subcellular location is the host cytoplasm. The protein localises to the host nucleus. It localises to the host nucleolus. The protein resides in the host cytoplasmic vesicle membrane. The catalysed reaction is RNA(n) + a ribonucleoside 5'-triphosphate = RNA(n+1) + diphosphate. It carries out the reaction ATP + H2O = ADP + phosphate + H(+). The enzyme catalyses Selective cleavage of Gln-|-Gly bond in the poliovirus polyprotein. In other picornavirus reactions Glu may be substituted for Gln, and Ser or Thr for Gly.. Forms a complex with host RAN and probably binds to exportins carrying activated MAPK in order to mediate the hyperphosphorylation of host Phe/Gly containing nuclear pore proteins (Nups) resulting in cessation of active nucleocytoplasmic transport. Proteins with NLS signals fail to import, cellular mRNAs fail to export, and some proteins small enough for diffusion are not retained anymore (efflux). The resulting inhibition of cellular protein synthesis serves to ensure maximal viral gene expression and to evade host immune response. The leader protein also inhibits host interferon regulatory factor 3 (IRF3) dimerization, thereby blocking the transcriptional activation of IFN genes. Binds to host RNase L thereby preventing its activation by 2'-5' oligoadenylates in order to counteract the antiviral interferon-inducible OAS/RNase L pathway. Inhibits the integrated stress response (ISR) in the infected cell. Inhibits the host EIF2AK2/PKR by rendering this kinase unable to detect double-stranded RNA. Also impairs host stress granule formation probably by acting on a step downstream of EIF2AK2/PKR activation. In terms of biological role, forms an icosahedral capsid of pseudo T=3 symmetry with capsid proteins VP2 and VP3. Together they form an icosahedral capsid composed of 60 copies of each VP1, VP2, and VP3, with a diameter of approximately 300 Angstroms. VP4 lies on the inner surface of the protein shell formed by VP1, VP2 and VP3. All the three latter proteins contain a beta-sheet structure called beta-barrel jelly roll. VP1 is situated at the 12 fivefold axes, whereas VP2 and VP3 are located at the quasi-sixfold axes. Functionally, lies on the inner surface of the capsid shell. After binding to the host receptor, the capsid undergoes conformational changes. Capsid protein VP4 is released, capsid protein VP1 N-terminus is externalized, and together, they shape a pore in the host membrane through which the viral genome is translocated into the host cell cytoplasm. After genome has been released, the channel shrinks. Its function is as follows. VP0 precursor is a component of immature procapsids. Involved in host translation shutoff by inhibiting cap-dependent mRNA translation. Nuclear localization is required for this function. The resulting inhibition of cellular protein synthesis serves to ensure maximal viral gene expression and to evade host immune response. Inhibits the phosphorylation of the leader protein. In terms of biological role, affects membrane integrity and causes an increase in membrane permeability. Functionally, associates with and induces structural rearrangements of intracellular membranes. It displays RNA-binding, nucleotide binding and NTPase activities. Its function is as follows. Serves as membrane anchor via its hydrophobic domain. Forms a primer, VPg-pU, which is utilized by the polymerase for the initiation of RNA chains. In terms of biological role, cysteine protease that generates mature viral proteins from the precursor polyprotein. In addition to its proteolytic activity, it binds to viral RNA, and thus influences viral genome replication. RNA and substrate cooperatively bind to the protease. Cleaves host PABP1, this cleavage is important for viral replication. Functionally, replicates the genomic and antigenomic RNAs by recognizing replications specific signals. Performs VPg uridylylation. The protein is Genome polyprotein of Mus musculus (Mouse).